Consider the following 270-residue polypeptide: Bark lectin (270 aa).

The signal sequence occupies residues Ile1 to Ser15. N-linked (GlcNAc...) asparagine glycosylation is found at Asn60, Asn76, and Asn127. Mn(2+) is bound by residues Glu141 and Asp143. Ca(2+)-binding residues include Asp143, His145, Asn147, and Asp150. Mn(2+) is bound by residues Asp150 and His155. An N-linked (GlcNAc...) asparagine glycan is attached at Asn201.

Belongs to the leguminous lectin family.

In terms of biological role, galNAc-specific lectin. The polypeptide is Bark lectin (Styphnolobium japonicum (Japanese pagoda tree)).